The sequence spans 360 residues: Phospho-N-acetylmuramoyl-pentapeptide-transferase (360 aa).

The next 10 membrane-spanning stretches (helical) occupy residues Tyr-21–Gly-41, Thr-73–Leu-93, Thr-94–Val-114, Trp-132–Gly-152, Val-168–Ser-188, Gly-199–Thr-219, Leu-239–Tyr-259, Val-263–Leu-283, Phe-288–Val-308, and Val-338–Lys-358.

Belongs to the glycosyltransferase 4 family. MraY subfamily. It depends on Mg(2+) as a cofactor.

The protein resides in the cell inner membrane. It carries out the reaction UDP-N-acetyl-alpha-D-muramoyl-L-alanyl-gamma-D-glutamyl-meso-2,6-diaminopimeloyl-D-alanyl-D-alanine + di-trans,octa-cis-undecaprenyl phosphate = di-trans,octa-cis-undecaprenyl diphospho-N-acetyl-alpha-D-muramoyl-L-alanyl-D-glutamyl-meso-2,6-diaminopimeloyl-D-alanyl-D-alanine + UMP. It participates in cell wall biogenesis; peptidoglycan biosynthesis. Catalyzes the initial step of the lipid cycle reactions in the biosynthesis of the cell wall peptidoglycan: transfers peptidoglycan precursor phospho-MurNAc-pentapeptide from UDP-MurNAc-pentapeptide onto the lipid carrier undecaprenyl phosphate, yielding undecaprenyl-pyrophosphoryl-MurNAc-pentapeptide, known as lipid I. This Vibrio cholerae serotype O1 (strain M66-2) protein is Phospho-N-acetylmuramoyl-pentapeptide-transferase.